The primary structure comprises 669 residues: Dymeclin (669 aa).

Gly2 carries the N-myristoyl glycine lipid modification.

This sequence belongs to the dymeclin family. Myristoylated in vitro; myristoylation is not essential for protein targeting to Golgi compartment.

Its subcellular location is the cytoplasm. The protein localises to the golgi apparatus. Necessary for correct organization of Golgi apparatus. The chain is Dymeclin (DYM) from Gallus gallus (Chicken).